We begin with the raw amino-acid sequence, 409 residues long: tRNA(Met) cytidine acetate ligase (409 aa).

Residues 7–20 (VVEY…HLYH), Gly102, Asn169, and Arg194 each bind ATP.

It belongs to the TmcAL family.

It is found in the cytoplasm. The enzyme catalyses cytidine(34) in elongator tRNA(Met) + acetate + ATP = N(4)-acetylcytidine(34) in elongator tRNA(Met) + AMP + diphosphate. Its function is as follows. Catalyzes the formation of N(4)-acetylcytidine (ac(4)C) at the wobble position of elongator tRNA(Met), using acetate and ATP as substrates. First activates an acetate ion to form acetyladenylate (Ac-AMP) and then transfers the acetyl group to tRNA to form ac(4)C34. The sequence is that of tRNA(Met) cytidine acetate ligase from Clostridium botulinum (strain Kyoto / Type A2).